The primary structure comprises 261 residues: uncharacterized protein (261 aa).

A signal peptide spans 1 to 20; sequence MKIQVMLIIIFVGIFTICLA. 2 N-linked (GlcNAc...) asparagine; by host glycosylation sites follow: Asn22 and Asn27.

The protein resides in the secreted. This is an uncharacterized protein from Acanthamoeba polyphaga (Amoeba).